We begin with the raw amino-acid sequence, 155 residues long: Transcriptional repressor NrdR (155 aa).

The segment at 3–34 is a zinc-finger region; the sequence is CPFCQHDDTQVLDTRVSEEGDSIRRRRRCTSC. Residues 49-139 form the ATP-cone domain; the sequence is PVVVKKNGSR…VYKSFEDVAE (91 aa).

This sequence belongs to the NrdR family. Zn(2+) serves as cofactor.

Functionally, negatively regulates transcription of bacterial ribonucleotide reductase nrd genes and operons by binding to NrdR-boxes. The polypeptide is Transcriptional repressor NrdR (Janthinobacterium sp. (strain Marseille) (Minibacterium massiliensis)).